The chain runs to 445 residues: RCC1 domain-containing protein RUG3, mitochondrial (445 aa).

The N-terminal 22 residues, M1–Q22, are a transit peptide targeting the mitochondrion. RCC1 repeat units follow at residues T47–S101, D118–H169, G171–E221, S222–K279, E280–E331, G333–D383, and G385–S442.

As to quaternary structure, interacts with ATM. As to expression, mostly expressed in roots and rosette leaves of young seedlings, and, to a lower extent, in the flowers and siliques of mature plants. Preferentially expressed in the vascular tissues.

Its subcellular location is the mitochondrion. Functionally, regulates DNA damage response (DDR) synergistically with ATM. Together with ATM, involved in the splicing of the ND2/NAD2 mRNA. Required for the accumulation of mitochondrial respiratory chain complex I. Negative regulator of plant responses to abscisic acid (ABA). May have a pivotal role in vegetative growth and the phase transition from vegetative to reproductive growth. This is RCC1 domain-containing protein RUG3, mitochondrial from Arabidopsis thaliana (Mouse-ear cress).